Reading from the N-terminus, the 800-residue chain is Signaling protein YkoW (800 aa).

7 helical membrane-spanning segments follow: residues 5 to 27 (VTYN…YISL), 44 to 66 (WLIG…GMMA), 76 to 98 (EFMP…LYFV), 103 to 125 (LTYY…MHYI), 135 to 157 (IIYE…FVSL), 178 to 200 (VSSI…AATF), and 215 to 237 (TFHW…LFSS). Positions 7-201 (YNTTLICLSI…YTGMLAATFH (195 aa)) constitute an MHYT domain. One can recognise a PAS domain in the interval 255-319 (QRFQSLIVHN…FEQVKKDKQA (65 aa)). The 135-residue stretch at 402–536 (YNTVVFFLDL…NKSKYRYYSF (135 aa)) folds into the GGDEF domain. Residues 545 to 798 (KLNQEMVLRE…QFEQFIIEQP (254 aa)) enclose the EAL domain.

Its subcellular location is the cell membrane. Functionally, probable signaling protein whose physiological role is not yet known. The protein is Signaling protein YkoW (ykoW) of Bacillus subtilis (strain 168).